Reading from the N-terminus, the 103-residue chain is Large ribosomal subunit protein uL24 (103 aa).

It belongs to the universal ribosomal protein uL24 family. In terms of assembly, part of the 50S ribosomal subunit.

In terms of biological role, one of two assembly initiator proteins, it binds directly to the 5'-end of the 23S rRNA, where it nucleates assembly of the 50S subunit. Functionally, one of the proteins that surrounds the polypeptide exit tunnel on the outside of the subunit. This is Large ribosomal subunit protein uL24 from Bacillus anthracis (strain A0248).